The primary structure comprises 169 residues: Lipoprotein signal peptidase (169 aa).

The next 4 membrane-spanning stretches (helical) occupy residues 10 to 30 (LPWL…KAFF), 41 to 61 (VVIP…AFSF), 68 to 88 (WQRW…VVWL), and 94 to 114 (GETW…GNLY). Active-site residues include Asp-124 and Asp-143. A helical transmembrane segment spans residues 135 to 155 (YFPAFNLADSAITVGAVMLAL).

It belongs to the peptidase A8 family.

It is found in the cell inner membrane. The enzyme catalyses Release of signal peptides from bacterial membrane prolipoproteins. Hydrolyzes -Xaa-Yaa-Zaa-|-(S,diacylglyceryl)Cys-, in which Xaa is hydrophobic (preferably Leu), and Yaa (Ala or Ser) and Zaa (Gly or Ala) have small, neutral side chains.. Its pathway is protein modification; lipoprotein biosynthesis (signal peptide cleavage). In terms of biological role, this protein specifically catalyzes the removal of signal peptides from prolipoproteins. This is Lipoprotein signal peptidase from Pseudomonas paraeruginosa (strain DSM 24068 / PA7) (Pseudomonas aeruginosa (strain PA7)).